Here is a 509-residue protein sequence, read N- to C-terminus: Dye-decolorizing peroxidase AauDyP1 (509 aa).

Residues 1–22 (MRLSPVFVALLSGLLAADLGLA) form the signal peptide. The propeptide occupies 23 to 61 (RSVAPRVADSPAAVTGTRKTSLLKNVAGLPPVPSAAQVA). The active-site Proton acceptor is the Asp229. Asn343 is a glycosylation site (N-linked (GlcNAc...) asparagine). Heme is bound at residue His365. 3 N-linked (GlcNAc...) asparagine glycosylation sites follow: Asn383, Asn410, and Asn476.

This sequence belongs to the DyP-type peroxidase family. Requires heme b as cofactor.

The protein resides in the secreted. The enzyme catalyses Reactive Blue 5 + 2 H2O2 = 2,2'-disulfonyl azobenzene + 3-[(4-amino-6-chloro-1,3,5-triazin-2-yl)amino]benzenesulfonate + phthalate + 2 H2O + 2 H(+). The catalysed reaction is 2 a phenolic donor + H2O2 = 2 a phenolic radical donor + 2 H2O. Inhibited by imidazole. Functionally, manganese-independent peroxidase that is able to convert a large number of compounds, but its physiological substrate is not known. In addition to classic peroxidase substrates (e.g. 2,6-dimethoxyphenol), oxidizes dyes such as Reactive Blue 5 and Reactive Black 5. This chain is Dye-decolorizing peroxidase AauDyP1, found in Auricularia auricula-judae (Judas ear fungus).